Reading from the N-terminus, the 490-residue chain is Ketol-acid reductoisomerase (NADP(+)) (490 aa).

One can recognise a KARI N-terminal Rossmann domain in the interval Ala-18 to Ser-208. Residues Cys-45–Gln-48, Arg-68, Arg-76, Ser-78, and Asp-108–Gln-110 each bind NADP(+). The active site involves His-132. Gly-158 lines the NADP(+) pocket. 2 consecutive KARI C-terminal knotted domains span residues Ser-209–Ala-344 and Gly-345–Met-486. Positions 217, 221, 389, and 393 each coordinate Mg(2+). Substrate is bound at residue Ser-414.

Belongs to the ketol-acid reductoisomerase family. Mg(2+) is required as a cofactor.

The enzyme catalyses (2R)-2,3-dihydroxy-3-methylbutanoate + NADP(+) = (2S)-2-acetolactate + NADPH + H(+). It catalyses the reaction (2R,3R)-2,3-dihydroxy-3-methylpentanoate + NADP(+) = (S)-2-ethyl-2-hydroxy-3-oxobutanoate + NADPH + H(+). Its pathway is amino-acid biosynthesis; L-isoleucine biosynthesis; L-isoleucine from 2-oxobutanoate: step 2/4. It functions in the pathway amino-acid biosynthesis; L-valine biosynthesis; L-valine from pyruvate: step 2/4. Its function is as follows. Involved in the biosynthesis of branched-chain amino acids (BCAA). Catalyzes an alkyl-migration followed by a ketol-acid reduction of (S)-2-acetolactate (S2AL) to yield (R)-2,3-dihydroxy-isovalerate. In the isomerase reaction, S2AL is rearranged via a Mg-dependent methyl migration to produce 3-hydroxy-3-methyl-2-ketobutyrate (HMKB). In the reductase reaction, this 2-ketoacid undergoes a metal-dependent reduction by NADPH to yield (R)-2,3-dihydroxy-isovalerate. The polypeptide is Ketol-acid reductoisomerase (NADP(+)) (Marinomonas sp. (strain MWYL1)).